A 337-amino-acid chain; its full sequence is Fructose-1,6-bisphosphatase class 1 (337 aa).

Residues Glu-94, Asp-116, Leu-118, and Asp-119 each contribute to the Mg(2+) site. Substrate is bound by residues 119 to 122, Asn-210, and Lys-276; that span reads DGSS. Glu-282 is a Mg(2+) binding site.

It belongs to the FBPase class 1 family. As to quaternary structure, homotetramer. It depends on Mg(2+) as a cofactor.

It localises to the cytoplasm. It carries out the reaction beta-D-fructose 1,6-bisphosphate + H2O = beta-D-fructose 6-phosphate + phosphate. It participates in carbohydrate biosynthesis; gluconeogenesis. The chain is Fructose-1,6-bisphosphatase class 1 from Burkholderia lata (strain ATCC 17760 / DSM 23089 / LMG 22485 / NCIMB 9086 / R18194 / 383).